The following is a 212-amino-acid chain: Probable 2-dehydro-3-deoxy-6-phosphogalactonate aldolase (212 aa).

2-dehydro-3-deoxy-6-phospho-D-galactonate is bound at residue arginine 18. Glutamate 41 functions as the Proton donor/acceptor in the catalytic mechanism. 2-dehydro-3-deoxy-6-phospho-D-galactonate contacts are provided by threonine 70, lysine 130, glycine 160, glycine 180, and serine 181. The active-site Schiff-base intermediate with substrate is lysine 130.

Belongs to the KHG/KDPG aldolase family. In terms of assembly, homotrimer.

It catalyses the reaction 2-dehydro-3-deoxy-6-phospho-D-galactonate = D-glyceraldehyde 3-phosphate + pyruvate. It participates in carbohydrate acid metabolism; D-galactonate degradation; D-glyceraldehyde 3-phosphate and pyruvate from D-galactonate: step 3/3. Its function is as follows. Involved in the degradation of galactose via the DeLey-Doudoroff pathway. Catalyzes the reversible, stereospecific retro-aldol cleavage of 2-keto-3-deoxy-6-phosphogalactonate (KDPGal) to pyruvate and D-glyceraldehyde-3-phosphate. This chain is Probable 2-dehydro-3-deoxy-6-phosphogalactonate aldolase (dgoA), found in Rhizobium meliloti (strain 1021) (Ensifer meliloti).